Consider the following 221-residue polypeptide: DNA mismatch repair protein MutH (221 aa).

It belongs to the MutH family.

The protein resides in the cytoplasm. In terms of biological role, sequence-specific endonuclease that cleaves unmethylated GATC sequences. It is involved in DNA mismatch repair. This is DNA mismatch repair protein MutH from Vibrio cholerae serotype O1 (strain ATCC 39315 / El Tor Inaba N16961).